The following is a 373-amino-acid chain: Alcohol dehydrogenase class-3 (373 aa).

A1 carries the post-translational modification N-acetylalanine. Positions 44, 66, 96, 99, 102, 110, and 173 each coordinate Zn(2+).

This sequence belongs to the zinc-containing alcohol dehydrogenase family. Class-III subfamily. In terms of assembly, homodimer. Zn(2+) serves as cofactor.

It is found in the cytoplasm. It catalyses the reaction a primary alcohol + NAD(+) = an aldehyde + NADH + H(+). The enzyme catalyses a secondary alcohol + NAD(+) = a ketone + NADH + H(+). The catalysed reaction is S-(hydroxymethyl)glutathione + NADP(+) = S-formylglutathione + NADPH + H(+). It carries out the reaction S-(hydroxymethyl)glutathione + NAD(+) = S-formylglutathione + NADH + H(+). It catalyses the reaction S-nitrosoglutathione + NADH + H(+) = S-(hydroxysulfenamide)glutathione + NAD(+). Functionally, class-III ADH is remarkably ineffective in oxidizing ethanol, but it readily catalyzes the oxidation of long-chain primary alcohols and the oxidation of S-(hydroxymethyl) glutathione. Also acts as a S-nitroso-glutathione reductase by catalyzing the NADH-dependent reduction of S-nitrosoglutathione, thereby regulating protein S-nitrosylation. The protein is Alcohol dehydrogenase class-3 of Saara hardwickii (Indian spiny-tailed lizard).